The sequence spans 561 residues: Urocanate hydratase (561 aa).

NAD(+)-binding positions include 52–53, Gln-130, 176–178, Glu-196, Arg-201, 242–243, 263–267, 273–274, and Tyr-322; these read GG, GMG, NA, QTSAH, and YL. Cys-410 is an active-site residue. NAD(+) is bound at residue Gly-492.

This sequence belongs to the urocanase family. NAD(+) is required as a cofactor.

It localises to the cytoplasm. The catalysed reaction is 4-imidazolone-5-propanoate = trans-urocanate + H2O. Its pathway is amino-acid degradation; L-histidine degradation into L-glutamate; N-formimidoyl-L-glutamate from L-histidine: step 2/3. Functionally, catalyzes the conversion of urocanate to 4-imidazolone-5-propionate. In Salmonella typhi, this protein is Urocanate hydratase.